Reading from the N-terminus, the 545-residue chain is Glutamyl-tRNA(Gln) amidotransferase subunit B-1, chloroplastic/mitochondrial (545 aa).

This sequence belongs to the GatB/GatE family. GatB subfamily. In terms of assembly, subunit of the heterotrimeric GatCAB amidotransferase (AdT) complex, composed of A, B and C subunits.

It is found in the mitochondrion. Its subcellular location is the plastid. The protein localises to the chloroplast. The enzyme catalyses L-glutamyl-tRNA(Gln) + L-glutamine + ATP + H2O = L-glutaminyl-tRNA(Gln) + L-glutamate + ADP + phosphate + H(+). Functionally, allows the formation of correctly charged Gln-tRNA(Gln) through the transamidation of misacylated Glu-tRNA(Gln) in chloroplasts and mitochondria. The reaction takes place in the presence of glutamine and ATP through an activated gamma-phospho-Glu-tRNA(Gln). The polypeptide is Glutamyl-tRNA(Gln) amidotransferase subunit B-1, chloroplastic/mitochondrial (Micromonas pusilla (strain CCMP1545) (Picoplanktonic green alga)).